The chain runs to 217 residues: Transmembrane emp24 domain-containing protein p24delta6 (217 aa).

Positions 1-26 are cleaved as a signal peptide; that stretch reads MAISPVLFIGLIYLAGGGSLFPGVEA. Residues 27-186 lie on the Lumenal side of the membrane; that stretch reads IWLTVPESGE…INEKTNTRVN (160 aa). A GOLD domain is found at 36 to 152; the sequence is ERCVYEEIQA…IEGVELEIRR (117 aa). N-linked (GlcNAc...) asparagine glycosylation is found at Asn84 and Asn116. Residues 138–160 adopt a coiled-coil conformation; sequence AKKEKIEGVELEIRRSTEYASAI. 2 positions are modified to omega-N-methylated arginine: Arg170 and Arg175. The chain crosses the membrane as a helical span at residues 187–207; the sequence is QLGLMSLGVAIVVSISQVLYL. Over 208 to 217 the chain is Cytoplasmic; that stretch reads KRYFLKKKLI. Positions 210-211 match the COPII vesicle coat-binding motif; it reads YF. The COPI vesicle coat-binding motif lies at 210–217; sequence YFLKKKLI.

Belongs to the EMP24/GP25L family. In terms of assembly, probably oligomerizes with other members of the EMP24/GP25L family. Associates with the COPI vesicle coat (coatomer). Associates with the COPII vesicle coat (coatomer).

The protein localises to the endoplasmic reticulum membrane. In terms of biological role, involved in vesicular protein trafficking. Mainly functions in the early secretory pathway. Thought to act as cargo receptor at the lumenal side for incorporation of secretory cargo molecules into transport vesicles and to be involved in vesicle coat formation at the cytoplasmic side. This Arabidopsis thaliana (Mouse-ear cress) protein is Transmembrane emp24 domain-containing protein p24delta6.